A 159-amino-acid polypeptide reads, in one-letter code: NADH-quinone oxidoreductase subunit I (159 aa).

4Fe-4S ferredoxin-type domains follow at residues 51 to 80 (RRYE…IESD) and 90 to 119 (TRYD…EGPN). 8 residues coordinate [4Fe-4S] cluster: cysteine 60, cysteine 63, cysteine 66, cysteine 70, cysteine 99, cysteine 102, cysteine 105, and cysteine 109.

The protein belongs to the complex I 23 kDa subunit family. In terms of assembly, NDH-1 is composed of 14 different subunits. Subunits NuoA, H, J, K, L, M, N constitute the membrane sector of the complex. It depends on [4Fe-4S] cluster as a cofactor.

It is found in the cell inner membrane. The catalysed reaction is a quinone + NADH + 5 H(+)(in) = a quinol + NAD(+) + 4 H(+)(out). Functionally, NDH-1 shuttles electrons from NADH, via FMN and iron-sulfur (Fe-S) centers, to quinones in the respiratory chain. The immediate electron acceptor for the enzyme in this species is believed to be ubiquinone. Couples the redox reaction to proton translocation (for every two electrons transferred, four hydrogen ions are translocated across the cytoplasmic membrane), and thus conserves the redox energy in a proton gradient. In Rickettsia typhi (strain ATCC VR-144 / Wilmington), this protein is NADH-quinone oxidoreductase subunit I.